Consider the following 711-residue polypeptide: Polyribonucleotide nucleotidyltransferase (711 aa).

Mg(2+) contacts are provided by Asp486 and Asp492. Residues 553–612 (PRIHTIKINPDKIKDVIGKGGSVIRALTEETGTTIEIEDDGTVKIAATDGEKAKHAIRRI) form the KH domain. The 69-residue stretch at 622-690 (GRVYTGKVTR…RQGRIRLSIK (69 aa)) folds into the S1 motif domain. The tract at residues 689-711 (IKEATEQSQPAAAPEAPAAEQGE) is disordered. Low complexity predominate over residues 694 to 711 (EQSQPAAAPEAPAAEQGE).

This sequence belongs to the polyribonucleotide nucleotidyltransferase family. Component of the RNA degradosome, which is a multiprotein complex involved in RNA processing and mRNA degradation. Mg(2+) is required as a cofactor.

Its subcellular location is the cytoplasm. It catalyses the reaction RNA(n+1) + phosphate = RNA(n) + a ribonucleoside 5'-diphosphate. In terms of biological role, involved in mRNA degradation. Catalyzes the phosphorolysis of single-stranded polyribonucleotides processively in the 3'- to 5'-direction. This chain is Polyribonucleotide nucleotidyltransferase, found in Shigella boydii serotype 4 (strain Sb227).